A 135-amino-acid polypeptide reads, in one-letter code: Hemoglobin subunit alpha (135 aa).

Positions 1–135 constitute a Globin domain; it reads AAVVALWGKI…VALALAERYK (135 aa). Residue histidine 52 coordinates O2. Histidine 81 lines the heme b pocket.

Belongs to the globin family. As to quaternary structure, hb1 is a heterotetramer of two alpha chains and two beta-1 chains. Hb2 is a heterotetramer of two alpha chains and two beta-2 chains. The N-terminus is blocked. As to expression, red blood cells.

Involved in oxygen transport from gills to the various peripheral tissues. In Dissostichus eleginoides (Patagonian toothfish), this protein is Hemoglobin subunit alpha.